The sequence spans 108 residues: L-rhamnose mutarotase (108 aa).

Position 18 (tyrosine 18) interacts with substrate. The active-site Proton donor is histidine 22. Residues tyrosine 41 and 76–77 contribute to the substrate site; that span reads WW.

It belongs to the rhamnose mutarotase family. As to quaternary structure, homodimer.

Its subcellular location is the cytoplasm. The catalysed reaction is alpha-L-rhamnose = beta-L-rhamnose. The protein operates within carbohydrate metabolism; L-rhamnose metabolism. In terms of biological role, involved in the anomeric conversion of L-rhamnose. This chain is L-rhamnose mutarotase, found in Paraburkholderia phymatum (strain DSM 17167 / CIP 108236 / LMG 21445 / STM815) (Burkholderia phymatum).